A 425-amino-acid polypeptide reads, in one-letter code: MLDLKLLQRSPEVVAKALADRGSSLDMAEFTALDERRRALLAEVEALKGERNKASGEVARMKRAGEDAAPLLERLSGLSDRIKDLDRETEEVKAAVNDWLLAVPNIPDASVPFGRSEADNPEVLRWGEPRAFSFAPKEHWEIGTALGGLDFERAGKLAGSRFAVYRTWAARMERALANFFLDTHVTEHGYVEIIPPFMVNRKTMTGTGQLPKFEEDLFKLEGWDYFLIPTAEVPLTNLHADDVLEEAQLPMGYAAMTPCFRSEAGSYGKDTRGLIRQHQFTKVEMVRFAHPERSFDELEKMRGHAEVLLQRLGLPYRVITLCTGDMGFSSAKTYDIEVWLPGQNAYREISSCSNCGDFQARRAGIRFRPAGGGKPEFAHTLNGSGLAVGRALVAVIENYQQEDGSVVIPEVLRPYMGGMERVTAE.

230–232 contacts L-serine; the sequence is TAE. Position 261–263 (261–263) interacts with ATP; it reads RSE. Residue glutamate 284 coordinates L-serine. Residue 348–351 coordinates ATP; the sequence is EISS. Residue serine 384 participates in L-serine binding.

This sequence belongs to the class-II aminoacyl-tRNA synthetase family. Type-1 seryl-tRNA synthetase subfamily. In terms of assembly, homodimer. The tRNA molecule binds across the dimer.

It localises to the cytoplasm. The catalysed reaction is tRNA(Ser) + L-serine + ATP = L-seryl-tRNA(Ser) + AMP + diphosphate + H(+). It catalyses the reaction tRNA(Sec) + L-serine + ATP = L-seryl-tRNA(Sec) + AMP + diphosphate + H(+). It participates in aminoacyl-tRNA biosynthesis; selenocysteinyl-tRNA(Sec) biosynthesis; L-seryl-tRNA(Sec) from L-serine and tRNA(Sec): step 1/1. Catalyzes the attachment of serine to tRNA(Ser). Is also able to aminoacylate tRNA(Sec) with serine, to form the misacylated tRNA L-seryl-tRNA(Sec), which will be further converted into selenocysteinyl-tRNA(Sec). The sequence is that of Serine--tRNA ligase from Nitratidesulfovibrio vulgaris (strain DSM 19637 / Miyazaki F) (Desulfovibrio vulgaris).